The primary structure comprises 208 residues: GATA transcription factor 20 (208 aa).

The GATA-type zinc finger occupies 94-119 (CASCDTTSTPLWRNGPKGPKSLCNAC).

It belongs to the type IV zinc-finger family. Class B subfamily.

The protein resides in the nucleus. Its function is as follows. Transcriptional regulator that specifically binds 5'-GATA-3' or 5'-GAT-3' motifs within gene promoters. This chain is GATA transcription factor 20, found in Arabidopsis thaliana (Mouse-ear cress).